The sequence spans 208 residues: Uracil phosphoribosyltransferase (208 aa).

Residues Arg78, Arg103, and 130–138 (DPMLATGGS) each bind 5-phospho-alpha-D-ribose 1-diphosphate. Residues Ile193 and 198-200 (GDA) each bind uracil. Asp199 contributes to the 5-phospho-alpha-D-ribose 1-diphosphate binding site.

The protein belongs to the UPRTase family. The cofactor is Mg(2+).

The catalysed reaction is UMP + diphosphate = 5-phospho-alpha-D-ribose 1-diphosphate + uracil. The protein operates within pyrimidine metabolism; UMP biosynthesis via salvage pathway; UMP from uracil: step 1/1. Its activity is regulated as follows. Allosterically activated by GTP. Functionally, catalyzes the conversion of uracil and 5-phospho-alpha-D-ribose 1-diphosphate (PRPP) to UMP and diphosphate. The sequence is that of Uracil phosphoribosyltransferase from Pasteurella multocida (strain Pm70).